The chain runs to 481 residues: CUGBP Elav-like family member 6 (481 aa).

A compositionally biased stretch (low complexity) spans 1–12 (MAAAPGGSAQPA). The interval 1-34 (MAAAPGGSAQPAGPGPRLGFSTADSGVGMSGLNP) is disordered. 3 consecutive RRM domains span residues 46–127 (IKLF…PAAS), 134–214 (RKLF…LADT), and 396–474 (CNLF…LKRP).

The protein belongs to the CELF/BRUNOL family. As to expression, expressed mainly in kidney, brain and testis and present in other tissues albeit at lower levels. Also expressed in fetal kidney.

Its subcellular location is the nucleus. It is found in the cytoplasm. In terms of biological role, RNA-binding protein implicated in the regulation of pre-mRNA alternative splicing. Mediates exon inclusion and/or exclusion in pre-mRNA that are subject to tissue-specific and developmentally regulated alternative splicing. Specifically activates exon 5 inclusion of TNNT2 in a muscle-specific splicing enhancer (MSE)-dependent manner. Promotes also exon exclusion of INSR pre-mRNA. The chain is CUGBP Elav-like family member 6 (CELF6) from Homo sapiens (Human).